The primary structure comprises 238 residues: Ribonuclease PH (238 aa).

Residues R86 and 124-126 (GTR) each bind phosphate.

Belongs to the RNase PH family. In terms of assembly, homohexameric ring arranged as a trimer of dimers.

It carries out the reaction tRNA(n+1) + phosphate = tRNA(n) + a ribonucleoside 5'-diphosphate. Functionally, phosphorolytic 3'-5' exoribonuclease that plays an important role in tRNA 3'-end maturation. Removes nucleotide residues following the 3'-CCA terminus of tRNAs; can also add nucleotides to the ends of RNA molecules by using nucleoside diphosphates as substrates, but this may not be physiologically important. Probably plays a role in initiation of 16S rRNA degradation (leading to ribosome degradation) during starvation. This chain is Ribonuclease PH, found in Pasteurella multocida (strain Pm70).